The chain runs to 531 residues: Zinc finger CCCH-type with G patch domain-containing protein (531 aa).

Met-1 is subject to N-acetylmethionine. Residues Glu-91–Lys-133 form a disordered region. The segment covering Ala-107–Gly-117 has biased composition (low complexity). Acidic residues predominate over residues Gln-118–Leu-129. The segment at Lys-175–Val-201 adopts a C3H1-type zinc-finger fold. The segment at Pro-267 to Ala-289 is disordered. The 47-residue stretch at Thr-333 to Glu-379 folds into the G-patch domain. Residue Ser-373 is modified to Phosphoserine. 3 disordered regions span residues Thr-385–Pro-409, Ala-426–His-446, and Arg-509–Phe-531. A compositionally biased stretch (low complexity) spans Ala-426–Gly-438. Residues Glu-518–Phe-531 are compositionally biased toward basic and acidic residues.

As to quaternary structure, interacts with CHD4/Mi-2; the interaction is direct. Post-translationally, ubiquitinated in case of infection by HIV-1, leading to its degradation. Ubiquitination is mediated by the CUL4A-RBX1-DDB1-DCAF1/VPRBP complex that is hijacked by HIV-1 via interaction between HIV-1 Vpr and DCAF1/VPRBP. Widely expressed.

The protein localises to the nucleus. Its function is as follows. Transcription repressor that specifically binds the 5'-GGAG[GA]A[GA]A-3' consensus sequence. Represses transcription by recruiting the chromatin multiprotein complex NuRD to target promoters. Negatively regulates expression of EGFR, a gene involved in cell proliferation, survival and migration. Its ability to repress genes of the EGFR pathway suggest it may act as a tumor suppressor. Able to suppress breast carcinogenesis. Functionally, antagonizes the transcription repression by isoform 1 by competing for the binding of the NuRD complex. Does not bind DNA. In Homo sapiens (Human), this protein is Zinc finger CCCH-type with G patch domain-containing protein (ZGPAT).